Here is a 617-residue protein sequence, read N- to C-terminus: Estrogen receptor (617 aa).

The tract at residues Met-1 to His-54 is disordered. The tract at residues Met-1–Tyr-186 is modulating. NR C4-type zinc fingers lie at residues Cys-187–Cys-207 and Cys-223–Cys-247. Residues Cys-187 to Met-252 constitute a DNA-binding region (nuclear receptor). The interval Met-253 to Met-315 is hinge. The segment at Asn-269 to Ser-303 is disordered. One can recognise an NR LBD domain in the interval Ser-316–His-552. The tract at residues Val-568–Pro-617 is disordered. Low complexity predominate over residues Thr-573–Thr-591. The span at Ser-606–Pro-617 shows a compositional bias: pro residues.

Belongs to the nuclear hormone receptor family. NR3 subfamily. As to quaternary structure, binds DNA as a homodimer. Can form a heterodimer with ER-beta. Ovary and testis.

The protein localises to the nucleus. The steroid hormones and their receptors are involved in the regulation of eukaryotic gene expression and affect cellular proliferation and differentiation in target tissues. The chain is Estrogen receptor (esr1) from Ictalurus punctatus (Channel catfish).